The sequence spans 391 residues: Lipoyl synthase, mitochondrial (391 aa).

The transit peptide at 1–44 (MVHPHLSRTKRTFFSHSSQMISRHIRKTNSLAFVRALSASETAV) directs the protein to the mitochondrion. Cys120, Cys125, Cys131, Cys150, Cys154, Cys157, and Ser365 together coordinate [4Fe-4S] cluster. Positions 135–354 (KKSEATATIM…KEVALEMGFL (220 aa)) constitute a Radical SAM core domain.

It belongs to the radical SAM superfamily. Lipoyl synthase family. It depends on [4Fe-4S] cluster as a cofactor.

The protein resides in the mitochondrion. It catalyses the reaction [[Fe-S] cluster scaffold protein carrying a second [4Fe-4S](2+) cluster] + N(6)-octanoyl-L-lysyl-[protein] + 2 oxidized [2Fe-2S]-[ferredoxin] + 2 S-adenosyl-L-methionine + 4 H(+) = [[Fe-S] cluster scaffold protein] + N(6)-[(R)-dihydrolipoyl]-L-lysyl-[protein] + 4 Fe(3+) + 2 hydrogen sulfide + 2 5'-deoxyadenosine + 2 L-methionine + 2 reduced [2Fe-2S]-[ferredoxin]. The protein operates within protein modification; protein lipoylation via endogenous pathway; protein N(6)-(lipoyl)lysine from octanoyl-[acyl-carrier-protein]: step 2/2. Functionally, catalyzes the radical-mediated insertion of two sulfur atoms into the C-6 and C-8 positions of the octanoyl moiety bound to the lipoyl domains of lipoate-dependent enzymes, thereby converting the octanoylated domains into lipoylated derivatives. The polypeptide is Lipoyl synthase, mitochondrial (Clavispora lusitaniae (strain ATCC 42720) (Yeast)).